Reading from the N-terminus, the 79-residue chain is UPF0349 protein GTNG_2908 (79 aa).

Belongs to the UPF0349 family.

The polypeptide is UPF0349 protein GTNG_2908 (Geobacillus thermodenitrificans (strain NG80-2)).